Consider the following 680-residue polypeptide: Penicillin-binding protein 2B (680 aa).

The Cytoplasmic segment spans residues 1-8 (MRKFNSHS). Residues 9–29 (IPIRLNLLFSIVILLFMTIIG) traverse the membrane as a helical segment. Over 30–680 (RLLYMQVLNK…NLYQKYHPMN (651 aa)) the chain is Extracellular. Residue Ser386 is the Acyl-ester intermediate of the active site.

The protein belongs to the transpeptidase family. Interacts with MreC in the elongasome.

The protein resides in the cell membrane. Its function is as follows. A transpeptidase that forms peptide cross-links between adjacent glycan strands in cell wall peptidoglycan (PG). Part of the elongasome machinery that synthesizes peripheral PG. The sequence is that of Penicillin-binding protein 2B from Streptococcus pneumoniae serotype 2 (strain D39 / NCTC 7466).